The primary structure comprises 144 residues: Cysteine desulfuration protein SufE (144 aa).

Residue Cys51 is the Cysteine persulfide intermediate of the active site.

Belongs to the SufE family. As to quaternary structure, homodimer. Interacts with SufS.

It localises to the cytoplasm. The protein operates within cofactor biosynthesis; iron-sulfur cluster biosynthesis. Its function is as follows. Participates in cysteine desulfuration mediated by SufS. Cysteine desulfuration mobilizes sulfur from L-cysteine to yield L-alanine and constitutes an essential step in sulfur metabolism for biosynthesis of a variety of sulfur-containing biomolecules. Functions as a sulfur acceptor for SufS, by mediating the direct transfer of the sulfur atom from the S-sulfanylcysteine of SufS, an intermediate product of cysteine desulfuration process. The sequence is that of Cysteine desulfuration protein SufE from Wigglesworthia glossinidia brevipalpis.